The primary structure comprises 300 residues: MRVIPLASESLGVRSLATFVEASGIKILIDPGVALGPKRYGLPPAKAEMEVLQKMRRKLQGYARRSEVVVISHYHYDHHTPFFEGLYESSSESYAREIYEGKPLFIKHPRENINFSQRKRAWAFLKNTEPIAGKIEFADGKSFDLGGVELEFSPAVPHGSEGSRLGFVVMTLIDDGSKRVIHASDIQMLNRKSVEWIIEKVPDLLITGGPPTYLGKRAEGSWQAGIKNLNEIIRETGAEIILDHHIIRDKNYPRFFDELEEIPKTFAGYLKVEDRPLEAYRRELHKIEKGGEAEIPFKLS.

It belongs to the UPF0282 family.

In Thermococcus onnurineus (strain NA1), this protein is UPF0282 protein TON_1363.